A 607-amino-acid polypeptide reads, in one-letter code: Dolichyl-diphosphooligosaccharide--protein glycosyltransferase subunit 1 (607 aa).

A signal peptide spans 1 to 23 (MEAPAARLFLLLLLGTWAPAPGS). The Lumenal portion of the chain corresponds to 24–434 (ASSEAPPLIN…VVHYTFNKVL (411 aa)). Lys187 carries the N6-acetyllysine modification. The N-linked (GlcNAc...) asparagine glycan is linked to Asn299. A helical membrane pass occupies residues 435–455 (MLQEPLLVVAAFYILFFTVII). Over 456 to 607 (YVRLDFSITK…TKIDHILDAL (152 aa)) the chain is Cytoplasmic. Lys538 is subject to N6-acetyllysine; alternate. A Glycyl lysine isopeptide (Lys-Gly) (interchain with G-Cter in SUMO2); alternate cross-link involves residue Lys538.

The protein belongs to the OST1 family. In terms of assembly, component of the oligosaccharyltransferase (OST) complex. OST exists in two different complex forms which contain common core subunits RPN1, RPN2, OST48, OST4, DAD1 and TMEM258, either STT3A or STT3B as catalytic subunits, and form-specific accessory subunits. STT3A complex assembly occurs through the formation of 3 subcomplexes. Subcomplex 1 contains RPN1 and TMEM258, subcomplex 2 contains the STT3A-specific subunits STT3A, DC2/OSTC, and KCP2 as well as the core subunit OST4, and subcomplex 3 contains RPN2, DAD1, and OST48. The STT3A complex can form stable complexes with the Sec61 complex or with both the Sec61 and TRAP complexes. Interacts with TMEM35A/NACHO. Ubiquitinated by the ECS(ASB11) complex. In terms of processing, ufmylated by UFL1 in response to endoplasmic reticulum stress, promoting reticulophagy of endoplasmic reticulum sheets.

The protein localises to the endoplasmic reticulum membrane. Its pathway is protein modification; protein glycosylation. Its function is as follows. Subunit of the oligosaccharyl transferase (OST) complex that catalyzes the initial transfer of a defined glycan (Glc(3)Man(9)GlcNAc(2) in eukaryotes) from the lipid carrier dolichol-pyrophosphate to an asparagine residue within an Asn-X-Ser/Thr consensus motif in nascent polypeptide chains, the first step in protein N-glycosylation. N-glycosylation occurs cotranslationally and the complex associates with the Sec61 complex at the channel-forming translocon complex that mediates protein translocation across the endoplasmic reticulum (ER). All subunits are required for a maximal enzyme activity. The sequence is that of Dolichyl-diphosphooligosaccharide--protein glycosyltransferase subunit 1 from Pongo abelii (Sumatran orangutan).